Here is a 253-residue protein sequence, read N- to C-terminus: Triosephosphate isomerase (253 aa).

Substrate is bound at residue 9-11 (NWK). His-95 acts as the Electrophile in catalysis. The Proton acceptor role is filled by Glu-167. Residues Gly-173, Ser-213, and 234-235 (GG) contribute to the substrate site. Position 213 is a phosphoserine (Ser-213).

The protein belongs to the triosephosphate isomerase family. As to quaternary structure, homodimer.

It localises to the cytoplasm. It carries out the reaction D-glyceraldehyde 3-phosphate = dihydroxyacetone phosphate. The protein operates within carbohydrate biosynthesis; gluconeogenesis. It functions in the pathway carbohydrate degradation; glycolysis; D-glyceraldehyde 3-phosphate from glycerone phosphate: step 1/1. Involved in the gluconeogenesis. Catalyzes stereospecifically the conversion of dihydroxyacetone phosphate (DHAP) to D-glyceraldehyde-3-phosphate (G3P). The protein is Triosephosphate isomerase of Bacillus pumilus (strain SAFR-032).